We begin with the raw amino-acid sequence, 141 residues long: Large ribosomal subunit protein uL11 (141 aa).

This sequence belongs to the universal ribosomal protein uL11 family. In terms of assembly, part of the ribosomal stalk of the 50S ribosomal subunit. Interacts with L10 and the large rRNA to form the base of the stalk. L10 forms an elongated spine to which L12 dimers bind in a sequential fashion forming a multimeric L10(L12)X complex. One or more lysine residues are methylated.

Functionally, forms part of the ribosomal stalk which helps the ribosome interact with GTP-bound translation factors. This is Large ribosomal subunit protein uL11 from Lactiplantibacillus plantarum (strain ATCC BAA-793 / NCIMB 8826 / WCFS1) (Lactobacillus plantarum).